The chain runs to 903 residues: DNA gyrase subunit A (903 aa).

In terms of domain architecture, Topo IIA-type catalytic spans 36–499 (LPDARDGFKP…AIDDSDDEDL (464 aa)). The active-site O-(5'-phospho-DNA)-tyrosine intermediate is the Tyr124. The GyrA-box motif lies at 526-532 (QNRGGKG). A compositionally biased stretch (basic and acidic residues) spans 881 to 895 (VDDDSVVKDDAEKQE). Residues 881 to 903 (VDDDSVVKDDAEKQEIGPTETEE) are disordered.

The protein belongs to the type II topoisomerase GyrA/ParC subunit family. As to quaternary structure, heterotetramer, composed of two GyrA and two GyrB chains. In the heterotetramer, GyrA contains the active site tyrosine that forms a transient covalent intermediate with DNA, while GyrB binds cofactors and catalyzes ATP hydrolysis.

Its subcellular location is the cytoplasm. The catalysed reaction is ATP-dependent breakage, passage and rejoining of double-stranded DNA.. Its function is as follows. A type II topoisomerase that negatively supercoils closed circular double-stranded (ds) DNA in an ATP-dependent manner to modulate DNA topology and maintain chromosomes in an underwound state. Negative supercoiling favors strand separation, and DNA replication, transcription, recombination and repair, all of which involve strand separation. Also able to catalyze the interconversion of other topological isomers of dsDNA rings, including catenanes and knotted rings. Type II topoisomerases break and join 2 DNA strands simultaneously in an ATP-dependent manner. This is DNA gyrase subunit A from Fibrobacter succinogenes (strain ATCC 19169 / S85).